Consider the following 441-residue polypeptide: ATP-dependent protease ATPase subunit HslU (441 aa).

Residues Ile-18, 60–65 (GVGKTE), Asp-254, Glu-319, and Arg-391 each bind ATP.

This sequence belongs to the ClpX chaperone family. HslU subfamily. As to quaternary structure, a double ring-shaped homohexamer of HslV is capped on each side by a ring-shaped HslU homohexamer. The assembly of the HslU/HslV complex is dependent on binding of ATP.

Its subcellular location is the cytoplasm. Functionally, ATPase subunit of a proteasome-like degradation complex; this subunit has chaperone activity. The binding of ATP and its subsequent hydrolysis by HslU are essential for unfolding of protein substrates subsequently hydrolyzed by HslV. HslU recognizes the N-terminal part of its protein substrates and unfolds these before they are guided to HslV for hydrolysis. The protein is ATP-dependent protease ATPase subunit HslU of Shewanella piezotolerans (strain WP3 / JCM 13877).